A 103-amino-acid chain; its full sequence is Pyrimidine/purine nucleoside phosphorylase (103 aa).

The protein belongs to the nucleoside phosphorylase PpnP family.

The enzyme catalyses a purine D-ribonucleoside + phosphate = a purine nucleobase + alpha-D-ribose 1-phosphate. The catalysed reaction is adenosine + phosphate = alpha-D-ribose 1-phosphate + adenine. It carries out the reaction cytidine + phosphate = cytosine + alpha-D-ribose 1-phosphate. It catalyses the reaction guanosine + phosphate = alpha-D-ribose 1-phosphate + guanine. The enzyme catalyses inosine + phosphate = alpha-D-ribose 1-phosphate + hypoxanthine. The catalysed reaction is thymidine + phosphate = 2-deoxy-alpha-D-ribose 1-phosphate + thymine. It carries out the reaction uridine + phosphate = alpha-D-ribose 1-phosphate + uracil. It catalyses the reaction xanthosine + phosphate = alpha-D-ribose 1-phosphate + xanthine. Catalyzes the phosphorolysis of diverse nucleosides, yielding D-ribose 1-phosphate and the respective free bases. Can use uridine, adenosine, guanosine, cytidine, thymidine, inosine and xanthosine as substrates. Also catalyzes the reverse reactions. This is Pyrimidine/purine nucleoside phosphorylase from Chlorobium chlorochromatii (strain CaD3).